Consider the following 384-residue polypeptide: Protein V (384 aa).

2 disordered regions span residues 1–23 and 38–317; these read MDQD…GGRE and SEPT…TKKG. Residues 7–20 show a composition bias toward basic and acidic residues; the sequence is ILKEDSEVEREAPG. Polar residues predominate over residues 50-59; the sequence is LHNTINTPQG. At S68 the chain carries Phosphoserine; by host. The span at 83–101 shows a compositional bias: basic and acidic residues; it reads RSGEESRVSGRTSKPEAEA. S125 bears the Phosphoserine; by host mark. The segment covering 150–168 has biased composition (basic and acidic residues); sequence GIEDENREMAAHPDKRGED. Polar residues predominate over residues 191–206; sequence ASNNGRSMEPGSSHSA. Phosphoserine; by host is present on residues S192, S249, S257, and S260. Zn(2+) is bound by residues H318, C337, C341, C353, C355, C358, C362, and C365.

This sequence belongs to the paramyxoviruses V protein family. As to quaternary structure, interacts with host IFIH1/MDA5 and DHX58/LGP2. Interacts with host IRF3. Interacts with host RIGI regulatory protein (via CARDs domain) and host TRIM25 (via SPRY domain); these interactions prevent TRIM25-mediated ubiquitination of RIG-I and disrupts downstream RIG-I signaling.

The protein resides in the host cytoplasm. Its function is as follows. Plays an essential role in the inhibition of host immune response. Prevents the establishment of cellular antiviral state by blocking interferon-alpha/beta (IFN-alpha/beta) production and signaling pathway. Interacts with host IFIH1/MDA5 and DHX58/LGP2 to inhibit the transduction pathway involved in the activation of IFN-beta promoter, thus protecting the virus against cell antiviral state. Also interacts with and inhibits host IRF3. Blocks the type I interferon signaling pathway by disrupting the RIG-I signaling pathway. The protein is Protein V (P/V/C) of Sendai virus (strain Z) (SeV).